Here is a 370-residue protein sequence, read N- to C-terminus: Dihydroorotate dehydrogenase (370 aa).

Substrate contacts are provided by residues Lys-82, 135 to 139 (NSFGM), and Asn-200. 82–83 (KT) contributes to the FMN binding site. Asn-200 lines the FMN pocket. Cys-203 acts as the Nucleophile in catalysis. Residues Lys-241 and Ile-269 each coordinate FMN. 270 to 271 (NT) lines the substrate pocket. FMN-binding positions include Gly-297, 328–329 (GG), and 350–351 (AT).

This sequence belongs to the dihydroorotate dehydrogenase family. FMN is required as a cofactor.

The catalysed reaction is (S)-dihydroorotate + A = orotate + AH2. The protein operates within pyrimidine metabolism; UMP biosynthesis via de novo pathway. Its function is as follows. Catalyzes the conversion of dihydroorotate to orotate. Participates in the pyrimidine biosynthetic pathway. This Dictyostelium discoideum (Social amoeba) protein is Dihydroorotate dehydrogenase (pyr4).